A 368-amino-acid polypeptide reads, in one-letter code: Probable endopolygalacturonase A (368 aa).

Positions 1-18 (MRSVELLSLAALGSLVAA) are cleaved as a signal peptide. Positions 19–31 (APAPSRVSDLTKR) are excised as a propeptide. A disulfide bond links Cys35 and Cys50. 7 PbH1 repeats span residues 140-162 (LEDS…SVQA), 167-192 (LIDI…DISE), 193-214 (STGV…AINS), 215-235 (GENI…SIGS), 244-265 (VKNV…RIKT), 273-295 (VSEV…VIEQ), and 307-352 (TTGV…DITG). Asp207 acts as the Proton donor in catalysis. A disulfide bridge connects residues Cys209 and Cys225. The active site involves His229. The N-linked (GlcNAc...) asparagine glycan is linked to Asn246. Disulfide bonds link Cys335–Cys340 and Cys359–Cys368.

The protein belongs to the glycosyl hydrolase 28 family.

It localises to the secreted. The catalysed reaction is (1,4-alpha-D-galacturonosyl)n+m + H2O = (1,4-alpha-D-galacturonosyl)n + (1,4-alpha-D-galacturonosyl)m.. Involved in maceration and soft-rotting of plant tissue. Hydrolyzes the 1,4-alpha glycosidic bonds of de-esterified pectate in the smooth region of the plant cell wall. The chain is Probable endopolygalacturonase A (pgaA) from Neosartorya fischeri (strain ATCC 1020 / DSM 3700 / CBS 544.65 / FGSC A1164 / JCM 1740 / NRRL 181 / WB 181) (Aspergillus fischerianus).